The sequence spans 793 residues: MKKLVHKESQWEILSQLGTGAFGRVVKAKKINCDGTGIIIDICAIKIIKKSVFTKNEIEILKQLDHPLIVKYYGYGVGEIDDNIYIYMEYIDGYPVSSILRKQPKNQFPEDIISKIVIDLALILSYIHDNERKIIHRDLKCDNIMLVNDNTHSCDVNGNCSRNGGGSAKSANQSFFTEDCVCNVNGSGTDENCKSCKLKSKPIREIQGSCESCGSDLEQDSSSSSSSSSSTINNGQSSTCRLINCIYSVSKKIKLIDFGLSKGCDGDSKYYSLVGTSTHMPPEVALRNNTACRKSDIWSLGCTIIEMAGGNLFEKDIHGKPKIPDHLSASCKNFIQRCLTIDPNHRDDIINLISHNFIDRNRINEEIKEDISKSKIQFDDEFNEIISPGDLDSVNEVVFGFDFNQTIIPGTMNSVKKIEFGGSFNKELLIDSLPSATSITFGARFNNGNKPFAIGAIPSTCKSITFGWTYNQPFYPGILPNSLKKLIFQEGGDFNRILEVGSLPSSITTLILGDYDQKIEKGVLPSSLTILELGGEFNQPLEGSIPDSVTSLTLGYRFNKALTENCIPPNCKFLKFGSNFNKDLSPGILPSSIETLILGYCFNKELVEGSLPLSITTLIYEHRDNQKKVSYDYKEVTNLSKDLEENEIIPLTPESLPESITKLTIGKNQNHVIEFNCLPPDLQCLKYHGGFIRPLIPRDLPSSITSVKLYNYNYEIKKTSIPKSVTSLQLGSRHNKFTQIQSLSNFHPNMRDLKIYINDDDIDIYNLKDIIPQTITSLIINGDNIDLPIGIEN.

In terms of domain architecture, Protein kinase spans 11–358; the sequence is WEILSQLGTG…IINLISHNFI (348 aa). ATP-binding positions include 17–25 and Lys-46; that span reads LGTGAFGRV. Asp-138 (proton acceptor) is an active-site residue. FNIP repeat units lie at residues 403-444, 470-514, 515-557, 558-601, and 691-733; these read FNQT…FGAR, YNQP…ILGD, YDQK…LGYR, FNKA…LGYC, and FIRP…LGSR.

The protein belongs to the protein kinase superfamily. STE Ser/Thr protein kinase family. It depends on Mg(2+) as a cofactor.

It catalyses the reaction L-seryl-[protein] + ATP = O-phospho-L-seryl-[protein] + ADP + H(+). The catalysed reaction is L-threonyl-[protein] + ATP = O-phospho-L-threonyl-[protein] + ADP + H(+). This Dictyostelium discoideum (Social amoeba) protein is Probable serine/threonine-protein kinase fnkA.